Reading from the N-terminus, the 1377-residue chain is DNA-directed RNA polymerase subunit beta'' (1377 aa).

Residues Cys-224, Cys-294, Cys-301, and Cys-304 each coordinate Zn(2+).

Belongs to the RNA polymerase beta' chain family. RpoC2 subfamily. In plastids the minimal PEP RNA polymerase catalytic core is composed of four subunits: alpha, beta, beta', and beta''. When a (nuclear-encoded) sigma factor is associated with the core the holoenzyme is formed, which can initiate transcription. It depends on Zn(2+) as a cofactor.

The protein resides in the plastid. It localises to the chloroplast. It catalyses the reaction RNA(n) + a ribonucleoside 5'-triphosphate = RNA(n+1) + diphosphate. DNA-dependent RNA polymerase catalyzes the transcription of DNA into RNA using the four ribonucleoside triphosphates as substrates. The chain is DNA-directed RNA polymerase subunit beta'' from Calycanthus floridus var. glaucus (Eastern sweetshrub).